Consider the following 287-residue polypeptide: 4-diphosphocytidyl-2-C-methyl-D-erythritol kinase (287 aa).

The active site involves K10. Residue 92–102 coordinates ATP; it reads PLAAGLAGGSA. The active site involves D134.

The protein belongs to the GHMP kinase family. IspE subfamily.

The catalysed reaction is 4-CDP-2-C-methyl-D-erythritol + ATP = 4-CDP-2-C-methyl-D-erythritol 2-phosphate + ADP + H(+). It participates in isoprenoid biosynthesis; isopentenyl diphosphate biosynthesis via DXP pathway; isopentenyl diphosphate from 1-deoxy-D-xylulose 5-phosphate: step 3/6. Its function is as follows. Catalyzes the phosphorylation of the position 2 hydroxy group of 4-diphosphocytidyl-2C-methyl-D-erythritol. This Caldanaerobacter subterraneus subsp. tengcongensis (strain DSM 15242 / JCM 11007 / NBRC 100824 / MB4) (Thermoanaerobacter tengcongensis) protein is 4-diphosphocytidyl-2-C-methyl-D-erythritol kinase.